The chain runs to 391 residues: Formate-dependent phosphoribosylglycinamide formyltransferase (391 aa).

N(1)-(5-phospho-beta-D-ribosyl)glycinamide is bound by residues 18 to 19 (EL) and Glu78. Residues Arg110, Lys151, 156–161 (SSGKGQ), 191–194 (EEFI), and Glu199 contribute to the ATP site. One can recognise an ATP-grasp domain in the interval 115 to 305 (ELAHEELGIR…EFELHLRAIL (191 aa)). Mg(2+) is bound by residues Glu264 and Glu276. N(1)-(5-phospho-beta-D-ribosyl)glycinamide-binding positions include Asp283, Lys353, and 360-361 (RR).

Belongs to the PurK/PurT family. In terms of assembly, homodimer.

It carries out the reaction N(1)-(5-phospho-beta-D-ribosyl)glycinamide + formate + ATP = N(2)-formyl-N(1)-(5-phospho-beta-D-ribosyl)glycinamide + ADP + phosphate + H(+). The protein operates within purine metabolism; IMP biosynthesis via de novo pathway; N(2)-formyl-N(1)-(5-phospho-D-ribosyl)glycinamide from N(1)-(5-phospho-D-ribosyl)glycinamide (formate route): step 1/1. Its function is as follows. Involved in the de novo purine biosynthesis. Catalyzes the transfer of formate to 5-phospho-ribosyl-glycinamide (GAR), producing 5-phospho-ribosyl-N-formylglycinamide (FGAR). Formate is provided by PurU via hydrolysis of 10-formyl-tetrahydrofolate. This chain is Formate-dependent phosphoribosylglycinamide formyltransferase, found in Trichormus variabilis (strain ATCC 29413 / PCC 7937) (Anabaena variabilis).